A 249-amino-acid chain; its full sequence is Triosephosphate isomerase (249 aa).

8–10 lines the substrate pocket; sequence NWK. The Electrophile role is filled by His95. Catalysis depends on Glu166, which acts as the Proton acceptor. Substrate is bound by residues Gly172, Ser211, and 232 to 233; that span reads GG.

Belongs to the triosephosphate isomerase family. In terms of assembly, homodimer.

The protein resides in the cytoplasm. The enzyme catalyses D-glyceraldehyde 3-phosphate = dihydroxyacetone phosphate. It participates in carbohydrate biosynthesis; gluconeogenesis. It functions in the pathway carbohydrate degradation; glycolysis; D-glyceraldehyde 3-phosphate from glycerone phosphate: step 1/1. Its function is as follows. Involved in the gluconeogenesis. Catalyzes stereospecifically the conversion of dihydroxyacetone phosphate (DHAP) to D-glyceraldehyde-3-phosphate (G3P). In Granulibacter bethesdensis (strain ATCC BAA-1260 / CGDNIH1), this protein is Triosephosphate isomerase.